The primary structure comprises 327 residues: Phenylalanine--tRNA ligase alpha subunit (327 aa).

Glu252 is a binding site for Mg(2+).

It belongs to the class-II aminoacyl-tRNA synthetase family. Phe-tRNA synthetase alpha subunit type 1 subfamily. As to quaternary structure, tetramer of two alpha and two beta subunits. It depends on Mg(2+) as a cofactor.

It localises to the cytoplasm. The enzyme catalyses tRNA(Phe) + L-phenylalanine + ATP = L-phenylalanyl-tRNA(Phe) + AMP + diphosphate + H(+). The sequence is that of Phenylalanine--tRNA ligase alpha subunit from Erwinia tasmaniensis (strain DSM 17950 / CFBP 7177 / CIP 109463 / NCPPB 4357 / Et1/99).